Reading from the N-terminus, the 196-residue chain is Peptidyl-tRNA hydrolase (196 aa).

Y18 serves as a coordination point for tRNA. The Proton acceptor role is filled by H23. Residues F69, N71, and N117 each coordinate tRNA.

The protein belongs to the PTH family. As to quaternary structure, monomer.

The protein resides in the cytoplasm. It carries out the reaction an N-acyl-L-alpha-aminoacyl-tRNA + H2O = an N-acyl-L-amino acid + a tRNA + H(+). Hydrolyzes ribosome-free peptidyl-tRNAs (with 1 or more amino acids incorporated), which drop off the ribosome during protein synthesis, or as a result of ribosome stalling. In terms of biological role, catalyzes the release of premature peptidyl moieties from peptidyl-tRNA molecules trapped in stalled 50S ribosomal subunits, and thus maintains levels of free tRNAs and 50S ribosomes. The protein is Peptidyl-tRNA hydrolase of Aliivibrio salmonicida (strain LFI1238) (Vibrio salmonicida (strain LFI1238)).